The chain runs to 101 residues: Small ribosomal subunit protein uS14 (101 aa).

Belongs to the universal ribosomal protein uS14 family. As to quaternary structure, part of the 30S ribosomal subunit. Contacts proteins S3 and S10.

Functionally, binds 16S rRNA, required for the assembly of 30S particles and may also be responsible for determining the conformation of the 16S rRNA at the A site. The sequence is that of Small ribosomal subunit protein uS14 from Ruegeria pomeroyi (strain ATCC 700808 / DSM 15171 / DSS-3) (Silicibacter pomeroyi).